The chain runs to 261 residues: MRVALGIEYDGSRYFGWQRQAEVDSVQAQLERALSFVANEPISIQCAGRTDAGVHATGQVVHFETNAVRKESAWTLGVNVNLPDDIAVRWAKDVDDEFHARFTATARRYRYMIYNHQFRPGILRSGVSHYPGQIDEAKMHEAAQFLLGEQDFTSFRAIQCQSNTPFRCVHEVNVTRQGMYICVDIKANAFLHHMVRNIVGSLLEVGYGRQPVSWIKELLALKDRTQAAATAKPNGLYLVDVTYPEHYALPKLALGPLFMLD.

Asp-51 acts as the Nucleophile in catalysis. Tyr-109 lines the substrate pocket.

It belongs to the tRNA pseudouridine synthase TruA family. Homodimer.

It carries out the reaction uridine(38/39/40) in tRNA = pseudouridine(38/39/40) in tRNA. In terms of biological role, formation of pseudouridine at positions 38, 39 and 40 in the anticodon stem and loop of transfer RNAs. The sequence is that of tRNA pseudouridine synthase A from Shewanella loihica (strain ATCC BAA-1088 / PV-4).